The chain runs to 379 residues: Cytochrome b (379 aa).

Helical transmembrane passes span 33–53 (FGSLLGACLIIQILTGLFLAM), 77–98 (WLIRYLHANGASMFFICLSIHA), 113–133 (WNIGIILFLTTMATAFVGYVL), and 178–198 (FFAFHFILPFIITAFVLVHLL). Histidine 83 and histidine 97 together coordinate heme b. The heme b site is built by histidine 182 and histidine 196. Histidine 201 provides a ligand contact to a ubiquinone. A run of 4 helical transmembrane segments spans residues 226–246 (IKDLLGVFLLLLALMILALFF), 288–308 (LGGVLALILSILILAAFPLLN), 320–340 (ITQTIYWIFIANLLVLTWIGG), and 347–367 (FTMIGQIASITYFAIILILMP).

This sequence belongs to the cytochrome b family. In terms of assembly, the cytochrome bc1 complex contains 11 subunits: 3 respiratory subunits (MT-CYB, CYC1 and UQCRFS1), 2 core proteins (UQCRC1 and UQCRC2) and 6 low-molecular weight proteins (UQCRH/QCR6, UQCRB/QCR7, UQCRQ/QCR8, UQCR10/QCR9, UQCR11/QCR10 and a cleavage product of UQCRFS1). This cytochrome bc1 complex then forms a dimer. Heme b serves as cofactor.

It is found in the mitochondrion inner membrane. In terms of biological role, component of the ubiquinol-cytochrome c reductase complex (complex III or cytochrome b-c1 complex) that is part of the mitochondrial respiratory chain. The b-c1 complex mediates electron transfer from ubiquinol to cytochrome c. Contributes to the generation of a proton gradient across the mitochondrial membrane that is then used for ATP synthesis. This is Cytochrome b (MT-CYB) from Thaptomys nigrita (Blackish grass mouse).